A 194-amino-acid polypeptide reads, in one-letter code: Putative 3-methyladenine DNA glycosylase (194 aa).

This sequence belongs to the DNA glycosylase MPG family.

The chain is Putative 3-methyladenine DNA glycosylase from Anaeromyxobacter sp. (strain Fw109-5).